A 507-amino-acid chain; its full sequence is Acetylcholine receptor subunit beta-type lev-1 (507 aa).

The first 31 residues, 1 to 31, serve as a signal peptide directing secretion; that stretch reads MMLGGGGGCGAGGTWLGFLVFLAVSLRNHST. 3 N-linked (GlcNAc...) asparagine glycosylation sites follow: Asn-28, Asn-58, and Asn-109. At 32–138 the chain is on the extracellular side; that stretch reads CEDIDAEDRL…NNADGNYEVS (107 aa). A helical transmembrane segment spans residues 139–159; the sequence is FMCNVLILSTGTVLWVPPAIY. An intrachain disulfide couples Cys-163 to Cys-177. 3 helical membrane-spanning segments follow: residues 243–263, 271–291, and 305–325; these read VVLI…FYLP, GLTM…SKIL, and LLLT…ICNI. Positions 373–392 are disordered; that stretch reads GPSVEENPMRSGEHHPLCRH. Positions 379–392 are enriched in basic and acidic residues; the sequence is NPMRSGEHHPLCRH. The helical transmembrane segment at 454–474 threads the bilayer; sequence FLLYGFFGATVGGTIGIIFTA.

The protein belongs to the ligand-gated ion channel (TC 1.A.9) family. Acetylcholine receptor (TC 1.A.9.1) subfamily. In terms of assembly, interacts with unc-29. Component of nicotinic acetylcholine receptor composed of 2 non-alpha subunits lev-1 and unc-29, and 3 alpha subunits unc-38, unc-63 and lev-8.

Its subcellular location is the postsynaptic cell membrane. The protein localises to the cell membrane. Non-alpha subunit of nicotinic acetylcholine receptor (nAChR). Involved in nAChR sensitivity to nicotine. The protein is Acetylcholine receptor subunit beta-type lev-1 (lev-1) of Caenorhabditis elegans.